We begin with the raw amino-acid sequence, 436 residues long: Trigger factor (436 aa).

Disordered stretches follow at residues Met1 to Asn26 and Gln81 to Gly100. The 86-residue stretch at Glu161–Pro246 folds into the PPIase FKBP-type domain.

It belongs to the FKBP-type PPIase family. Tig subfamily.

Its subcellular location is the cytoplasm. The catalysed reaction is [protein]-peptidylproline (omega=180) = [protein]-peptidylproline (omega=0). Its function is as follows. Involved in protein export. Acts as a chaperone by maintaining the newly synthesized protein in an open conformation. Functions as a peptidyl-prolyl cis-trans isomerase. This is Trigger factor from Halorhodospira halophila (strain DSM 244 / SL1) (Ectothiorhodospira halophila (strain DSM 244 / SL1)).